Consider the following 376-residue polypeptide: Putative 12-oxophytodienoate reductase 2 (376 aa).

FMN is bound by residues 31–33 (PLT), Ala-64, and Gln-106. 178-181 (HGAH) provides a ligand contact to substrate. The active-site Proton donor is Tyr-183. FMN is bound by residues Arg-230, Gly-301, and 322 to 323 (GR).

Belongs to the NADH:flavin oxidoreductase/NADH oxidase family. It depends on FMN as a cofactor.

In terms of biological role, putative oxophytodienoate reductase that may be involved in the biosynthesis or metabolism of oxylipin signaling molecules. The polypeptide is Putative 12-oxophytodienoate reductase 2 (OPR2) (Oryza sativa subsp. japonica (Rice)).